A 122-amino-acid polypeptide reads, in one-letter code: UPF0231 protein VV1_1657 (122 aa).

Belongs to the UPF0231 family.

This Vibrio vulnificus (strain CMCP6) protein is UPF0231 protein VV1_1657.